The sequence spans 339 residues: Phenylalanine--tRNA ligase alpha subunit (339 aa).

Residue E250 coordinates Mg(2+).

This sequence belongs to the class-II aminoacyl-tRNA synthetase family. Phe-tRNA synthetase alpha subunit type 1 subfamily. Tetramer of two alpha and two beta subunits. It depends on Mg(2+) as a cofactor.

The protein localises to the cytoplasm. The enzyme catalyses tRNA(Phe) + L-phenylalanine + ATP = L-phenylalanyl-tRNA(Phe) + AMP + diphosphate + H(+). This is Phenylalanine--tRNA ligase alpha subunit from Parabacteroides distasonis (strain ATCC 8503 / DSM 20701 / CIP 104284 / JCM 5825 / NCTC 11152).